Here is a 127-residue protein sequence, read N- to C-terminus: Ribosome-binding factor A (127 aa).

This sequence belongs to the RbfA family. In terms of assembly, monomer. Binds 30S ribosomal subunits, but not 50S ribosomal subunits or 70S ribosomes.

It is found in the cytoplasm. Its function is as follows. One of several proteins that assist in the late maturation steps of the functional core of the 30S ribosomal subunit. Associates with free 30S ribosomal subunits (but not with 30S subunits that are part of 70S ribosomes or polysomes). Required for efficient processing of 16S rRNA. May interact with the 5'-terminal helix region of 16S rRNA. The chain is Ribosome-binding factor A from Nitrosococcus oceani (strain ATCC 19707 / BCRC 17464 / JCM 30415 / NCIMB 11848 / C-107).